A 255-amino-acid polypeptide reads, in one-letter code: Hydroxyacylglutathione hydrolase (255 aa).

Zn(2+) contacts are provided by H56, H58, D60, H61, H114, D133, and H171.

This sequence belongs to the metallo-beta-lactamase superfamily. Glyoxalase II family. Monomer. The cofactor is Zn(2+).

It carries out the reaction an S-(2-hydroxyacyl)glutathione + H2O = a 2-hydroxy carboxylate + glutathione + H(+). It functions in the pathway secondary metabolite metabolism; methylglyoxal degradation; (R)-lactate from methylglyoxal: step 2/2. Its function is as follows. Thiolesterase that catalyzes the hydrolysis of S-D-lactoyl-glutathione to form glutathione and D-lactic acid. This Roseobacter denitrificans (strain ATCC 33942 / OCh 114) (Erythrobacter sp. (strain OCh 114)) protein is Hydroxyacylglutathione hydrolase.